Consider the following 283-residue polypeptide: Non-selective voltage-gated ion channel VDAC3 (283 aa).

Cysteine 2 bears the N-acetylcysteine mark. Residue threonine 4 is modified to Phosphothreonine. Residues lysine 12, lysine 15, and lysine 20 each carry the N6-acetyllysine modification. 2 beta stranded membrane passes run 26–35 (MVKIDLRTKS) and 39–47 (VEFSTSGHA). Residue lysine 53 forms a Glycyl lysine isopeptide (Lys-Gly) (interchain with G-Cter in ubiquitin) linkage. Beta stranded transmembrane passes span 54 to 64 (ASGNLETKYKI), 69 to 76 (LTFTQKWN), and 80 to 89 (TLGTEISLEN). An N6-acetyllysine modification is found at lysine 90. Residues 95–104 (LKLTLDTIFV) form a beta stranded membrane-spanning segment. Residues lysine 109 and lysine 110 each participate in a glycyl lysine isopeptide (Lys-Gly) (interchain with G-Cter in ubiquitin) cross-link. The next 10 beta stranded transmembrane spans lie at 111–120 (SGKLKASYKR), 123–130 (FSIGSNVD), 137–145 (TIYGWAVLA), 150–158 (LAGYQMSFD), 163–175 (KLSQ…GYKA), 178–185 (FQLHTHVN), 189–198 (EFGGSIYQKV), 202–211 (IETSINLAWT), 218–227 (RFGIAAKYKL), and 231–238 (TSLSAKVN). Serine 241 carries the phosphoserine modification. Residues 242–244 (LIG) and 260–264 (SALID) contribute to the NAD(+) site. 2 beta stranded membrane-spanning segments follow: residues 242-251 (LIGLGYTQTL) and 254-263 (GVKLTLSALI). An N6-acetyllysine; alternate modification is found at lysine 266. Lysine 266 participates in a covalent cross-link: Glycyl lysine isopeptide (Lys-Gly) (interchain with G-Cter in ubiquitin); alternate. A beta stranded transmembrane segment spans residues 273–282 (HKVGLGFELE).

Belongs to the eukaryotic mitochondrial porin family. In terms of assembly, interacts with ARMC12 in a TBC1D21-dependent manner. Interacts with MISFA. Ubiquitinated by PRKN during mitophagy, leading to its degradation and enhancement of mitophagy. Deubiquitinated by USP30.

Its subcellular location is the mitochondrion outer membrane. It is found in the membrane. It catalyses the reaction chloride(in) = chloride(out). It carries out the reaction K(+)(in) = K(+)(out). Functionally, non-selective voltage-gated ion channel that mediates the transport of anions and cations through the mitochondrion outer membrane and plasma membrane. Forms a high-conducting channel with a stable open state and a voltage-induced closure with a mild preference for anions over cations. Involved in male fertility and sperm mitochondrial sheath formation. The protein is Non-selective voltage-gated ion channel VDAC3 of Sus scrofa (Pig).